The following is a 447-amino-acid chain: Glutamate--tRNA ligase 1 (447 aa).

A 'HIGH' region motif is present at residues Pro-10 to Asn-20. Residues Lys-240–Arg-244 carry the 'KMSKS' region motif. ATP is bound at residue Lys-243.

Belongs to the class-I aminoacyl-tRNA synthetase family. Glutamate--tRNA ligase type 1 subfamily. Monomer.

It is found in the cytoplasm. The catalysed reaction is tRNA(Glu) + L-glutamate + ATP = L-glutamyl-tRNA(Glu) + AMP + diphosphate. Catalyzes the attachment of glutamate to tRNA(Glu) in a two-step reaction: glutamate is first activated by ATP to form Glu-AMP and then transferred to the acceptor end of tRNA(Glu). The chain is Glutamate--tRNA ligase 1 from Rickettsia felis (strain ATCC VR-1525 / URRWXCal2) (Rickettsia azadi).